We begin with the raw amino-acid sequence, 477 residues long: UDP-N-acetylmuramate--L-alanine ligase (477 aa).

An ATP-binding site is contributed by 122–128; the sequence is GTHGKTT.

The protein belongs to the MurCDEF family.

The protein resides in the cytoplasm. It carries out the reaction UDP-N-acetyl-alpha-D-muramate + L-alanine + ATP = UDP-N-acetyl-alpha-D-muramoyl-L-alanine + ADP + phosphate + H(+). Its pathway is cell wall biogenesis; peptidoglycan biosynthesis. In terms of biological role, cell wall formation. The polypeptide is UDP-N-acetylmuramate--L-alanine ligase (Xanthomonas euvesicatoria pv. vesicatoria (strain 85-10) (Xanthomonas campestris pv. vesicatoria)).